The primary structure comprises 290 residues: Protein translocase subunit SecF (290 aa).

Helical transmembrane passes span 15–35 (VFMILSLLFVIIGMYFFFTKG), 131–151 (KAILAAVLAIIVMLVYITVRF), 156–176 (AISAIINEAFVLLATISIFAI), 184–204 (SFIAAILTLLGYAINDNIIVF), 234–256 (TLYTVITTLLAITPLLIWGGVVL), and 260–282 (ILAIYLGIIIGTYSTIYIASAIL).

The protein belongs to the SecD/SecF family. SecF subfamily. As to quaternary structure, forms a complex with SecD. Part of the essential Sec protein translocation apparatus which comprises SecA, SecYEG and auxiliary proteins SecDF. Other proteins may also be involved.

It localises to the cell inner membrane. In terms of biological role, part of the Sec protein translocase complex. Interacts with the SecYEG preprotein conducting channel. SecDF uses the proton motive force (PMF) to complete protein translocation after the ATP-dependent function of SecA. This Dictyoglomus turgidum (strain DSM 6724 / Z-1310) protein is Protein translocase subunit SecF.